A 396-amino-acid chain; its full sequence is Zinc metalloproteinase nas-24 (396 aa).

The N-terminal stretch at 1–20 is a signal peptide; the sequence is MTRVVHIIGAAFLLSSYAYC. Residues 44 to 230 enclose the Peptidase M12A domain; the sequence is ERLGSKWLGG…YKINQYYGCG (187 aa). Residues Asn-63 and Asn-79 are each glycosylated (N-linked (GlcNAc...) asparagine). Cystine bridges form between Cys-82-Cys-229, Cys-105-Cys-129, Cys-231-Cys-251, and Cys-253-Cys-262. His-137 contributes to the Zn(2+) binding site. Residue Glu-138 is part of the active site. Positions 141 and 147 each coordinate Zn(2+). Residues 224–263 form the EGF-like domain; the sequence is NQYYGCGCSTQLECKNGGYTSPSDCSRCNCPKGFFGKLCN. An N-linked (GlcNAc...) asparagine glycan is attached at Asn-310.

It depends on Zn(2+) as a cofactor.

The protein resides in the secreted. Metalloprotease. This Caenorhabditis elegans protein is Zinc metalloproteinase nas-24 (nas-24).